Consider the following 115-residue polypeptide: T cell receptor beta variable 18 (115 aa).

Residues Met-1–Ala-21 form the signal peptide. The Ig-like domain maps to Gly-22 to Pro-115. An intrachain disulfide couples Cys-42 to Cys-111.

As to quaternary structure, alpha-beta TR is a heterodimer composed of an alpha and beta chain; disulfide-linked. The alpha-beta TR is associated with the transmembrane signaling CD3 coreceptor proteins to form the TR-CD3 (TcR or TCR). The assembly of alpha-beta TR heterodimers with CD3 occurs in the endoplasmic reticulum where a single alpha-beta TR heterodimer associates with one CD3D-CD3E heterodimer, one CD3G-CD3E heterodimer and one CD247 homodimer forming a stable octameric structure. CD3D-CD3E and CD3G-CD3E heterodimers preferentially associate with TR alpha and TR beta chains, respectively. The association of the CD247 homodimer is the last step of TcR assembly in the endoplasmic reticulum and is required for transport to the cell surface.

The protein localises to the cell membrane. V region of the variable domain of T cell receptor (TR) beta chain that participates in the antigen recognition. Alpha-beta T cell receptors are antigen specific receptors which are essential to the immune response and are present on the cell surface of T lymphocytes. Recognize peptide-major histocompatibility (MH) (pMH) complexes that are displayed by antigen presenting cells (APC), a prerequisite for efficient T cell adaptive immunity against pathogens. Binding of alpha-beta TR to pMH complex initiates TR-CD3 clustering on the cell surface and intracellular activation of LCK that phosphorylates the ITAM motifs of CD3G, CD3D, CD3E and CD247 enabling the recruitment of ZAP70. In turn ZAP70 phosphorylates LAT, which recruits numerous signaling molecules to form the LAT signalosome. The LAT signalosome propagates signal branching to three major signaling pathways, the calcium, the mitogen-activated protein kinase (MAPK) kinase and the nuclear factor NF-kappa-B (NF-kB) pathways, leading to the mobilization of transcription factors that are critical for gene expression and essential for T cell growth and differentiation. The T cell repertoire is generated in the thymus, by V-(D)-J rearrangement. This repertoire is then shaped by intrathymic selection events to generate a peripheral T cell pool of self-MH restricted, non-autoaggressive T cells. Post-thymic interaction of alpha-beta TR with the pMH complexes shapes TR structural and functional avidity. The polypeptide is T cell receptor beta variable 18 (Homo sapiens (Human)).